The primary structure comprises 539 residues: Glucose-6-phosphate isomerase (539 aa).

Glu349 (proton donor) is an active-site residue. Catalysis depends on residues His380 and Lys508. Residues Glu519–Arg539 form a disordered region.

The protein belongs to the GPI family.

The protein localises to the cytoplasm. The catalysed reaction is alpha-D-glucose 6-phosphate = beta-D-fructose 6-phosphate. It participates in carbohydrate biosynthesis; gluconeogenesis. It functions in the pathway carbohydrate degradation; glycolysis; D-glyceraldehyde 3-phosphate and glycerone phosphate from D-glucose: step 2/4. In terms of biological role, catalyzes the reversible isomerization of glucose-6-phosphate to fructose-6-phosphate. The polypeptide is Glucose-6-phosphate isomerase (Caulobacter vibrioides (strain ATCC 19089 / CIP 103742 / CB 15) (Caulobacter crescentus)).